Here is a 567-residue protein sequence, read N- to C-terminus: MFLPTTREEMKKLGWRELDVILVTGDAYVDHPSFGVALIGHYLVSHGFKVGIIAQPDWRTEKDITRLGRPRLFFGVTAGNVDSMVANYTASKKKRKTDDYTPGGSGGKRPDRATIVYTNLIKRFFPEVPVVLGGLEASLRRFAHYDWWSEKVRKSILVDSKADLLVYGMGEKAVLEIAQILSRTGDIEKCKSVRGVVWWASQKPEEGIELPSYDEISENPEKYAEALKLQTWYTDPYKNILIYQKQDTRYVVQNPPQLPLSQEELDRLYLLPFEREVHPFYAKMGRVKAIETVKFSITAVRGCFGSCSFCALTQHQTTHVSYRSKDSILEEVRILTKKKDFKGTITDVGGPTANLYGSSCSIRETKGQCQKFCLYPSVCKIVRPNHDEFISLLESIRKIPGVRNVFVSSGIRHDFVLAEKDPDVFIRELVKYTPGQLKLAPEHAHPKVLSLMRKPPVELFLEFKKRFETLAKKMGKRKYVIGYFIVGHPGEGWRENNYLRDFILKHLGYFPQQIQIFTPTPGTVSTAMYYSGLDPFTGEKVHVERSLKVRNKMKENVLFKKKGREKR.

One can recognise a Radical SAM core domain in the interval 288–560 (KAIETVKFSI…NKMKENVLFK (273 aa)). Residues C303, C307, and C310 each contribute to the [4Fe-4S] cluster site.

The protein belongs to the UPF0313 family. [4Fe-4S] cluster is required as a cofactor.

In Thermotoga neapolitana (strain ATCC 49049 / DSM 4359 / NBRC 107923 / NS-E), this protein is UPF0313 protein CTN_0332.